Reading from the N-terminus, the 2696-residue chain is Histone-lysine N-methyltransferase, H3 lysine-36 specific (2696 aa).

Serine 117 carries the post-translational modification Phosphoserine. Disordered stretches follow at residues 207-252 (MGSE…EKAA) and 281-311 (DPDSSTSTLGNMLELPGTSSSSTSQELPFCQ). The span at 236 to 248 (QKNKQRNEVDGSN) shows a compositional bias: basic and acidic residues. 2 stretches are compositionally biased toward polar residues: residues 281–290 (DPDSSTSTLG) and 297–306 (GTSSSSTSQE). The PWWP 1 domain maps to 323-388 (VGDLIWAKFK…AGKAIVMFEG (66 aa)). Phosphoserine occurs at positions 483 and 486. Positions 487-514 (ADEKEKPCAKSRARKSSDNPKRTSVKKG) are disordered. Serine 766 is modified (phosphoserine). The tract at residues 872–891 (LGEDVSDSGTSKPSKPLLFS) is disordered. A Glycyl lysine isopeptide (Lys-Gly) (interchain with G-Cter in SUMO2) cross-link involves residue lysine 906. 7 disordered regions span residues 936–1035 (YRSP…DAFS), 1067–1093 (VLQGDRERGGSLRGGAEDPSKEDPLQI), 1112–1134 (SKVKQSDPGKISEKGLSFENGKG), 1243–1272 (SIGDMEKEPGIPSLTPQAELPEPAVRSEKK), 1294–1344 (PKKK…EPPV), 1382–1428 (SPRP…KKGD), and 1480–1534 (KMQC…MQGE). Positions 948 to 961 (SPVGVSKVLVSGGS) are enriched in low complexity. Residues 971–982 (GTQNSANPSPSG) show a composition bias toward polar residues. Composition is skewed to basic and acidic residues over residues 1000–1017 (SDKRDLPASGKSRSDCVT), 1070–1090 (GDRERGGSLRGGAEDPSKEDP), and 1112–1124 (SKVKQSDPGKISE). Residues 1300-1314 (KVQEQVHKVSSRCEE) are compositionally biased toward basic and acidic residues. Over residues 1323–1337 (SSAQNKQVDENSLIS) the composition is skewed to polar residues. Residue lysine 1339 forms a Glycyl lysine isopeptide (Lys-Gly) (interchain with G-Cter in SUMO2) linkage. Position 1510 is a phosphoserine (serine 1510). The segment covering 1513–1523 (ETVEEGVEHDP) has biased composition (basic and acidic residues). 3 consecutive PHD-type zinc fingers follow at residues 1543–1589 (ENVC…CRTG), 1590–1646 (IHTC…CHAA), and 1707–1751 (VSWC…CKAG). In terms of domain architecture, PWWP 2 spans 1756–1818 (YREIVWVKVG…QARVFPYMEG (63 aa)). The 51-residue stretch at 1890-1940 (SEIPRCNCKATDENPCGIDSECINRMLLYECHPTVCPAGGRCQNQCFSKRQ) folds into the AWS domain. Residues 1942 to 2059 (PEVEIFRTLQ…AGTELTFNYN (118 aa)) enclose the SET domain. S-adenosyl-L-methionine is bound by residues 1952 to 1954 (RGW), 1994 to 1997 (TNFY), 2020 to 2021 (NH), asparagine 2065, and lysine 2071. An inhibits enzyme activity in the absence of bound histone region spans residues 2060 to 2066 (LECLGNG). A Post-SET domain is found at 2066-2082 (GKTVCKCGAPNCSGFLG). The tract at residues 2091 to 2111 (ATEEKSKKFKKKQQGKRRTQG) is disordered. Residues 2097–2108 (KKFKKKQQGKRR) show a composition bias toward basic residues. Residues 2118 to 2165 (EDECFSCGDAGQLVSCKKPGCPKVYHADCLNLTKRPAGKWECPWHQCD) form a PHD-type 4; atypical zinc finger. The disordered stretch occupies residues 2213–2422 (LEPGEIREYV…SLSQRLPPPE (210 aa)). The span at 2222–2232 (VPPPVPLPPGP) shows a compositional bias: pro residues. Positions 2281–2298 (RPLERTDSRPQPLDKVRD) are enriched in basic and acidic residues. The span at 2303-2314 (GTKSQSLVSSQR) shows a compositional bias: polar residues. A compositionally biased stretch (low complexity) spans 2330–2348 (SDKPSPVTSPSSSPSVRSQ). Serine 2369 is modified (phosphoserine). 2 stretches are compositionally biased toward polar residues: residues 2371 to 2381 (RPQSLEKTSVP) and 2394 to 2404 (ITSSPKPQTSD). Threonine 2462 bears the Phosphothreonine mark. Disordered regions lie at residues 2464-2499 (RQKERAASPHQVTPQADEKMPVLESSSWPASKGLGH), 2553-2575 (TQASGRASAGAEQTPGPLSQSPG), 2595-2616 (KSGQSFRSLGKAPASLPTEEKK), and 2665-2696 (LGRGQDPKPEQNTLPALNQAPSSHKCAESEQK). Residue serine 2471 is modified to Phosphoserine. Lysine 2616 is covalently cross-linked (Glycyl lysine isopeptide (Lys-Gly) (interchain with G-Cter in SUMO2)). The span at 2674–2686 (EQNTLPALNQAPS) shows a compositional bias: polar residues.

This sequence belongs to the class V-like SAM-binding methyltransferase superfamily. As to quaternary structure, interacts with the ligand-binding domains of RARA and THRA in the absence of ligand; in the presence of ligand the interaction is severely disrupted but some binding still occurs. Interacts with the ligand-binding domains of RXRA and ESRRA only in the presence of ligand. Interacts with ZNF496. Interacts with AR DNA- and ligand-binding domains. As to expression, expressed in the fetal/adult brain, kidney, skeletal muscle, spleen, and the thymus, and faintly in the lung.

The protein resides in the nucleus. Its subcellular location is the chromosome. The enzyme catalyses L-lysyl(36)-[histone H3] + 2 S-adenosyl-L-methionine = N(6),N(6)-dimethyl-L-lysyl(36)-[histone H3] + 2 S-adenosyl-L-homocysteine + 2 H(+). Its function is as follows. Histone methyltransferase that dimethylates Lys-36 of histone H3 (H3K36me2). Transcriptional intermediary factor capable of both negatively or positively influencing transcription, depending on the cellular context. In Homo sapiens (Human), this protein is Histone-lysine N-methyltransferase, H3 lysine-36 specific (NSD1).